The sequence spans 108 residues: Tetrahydromethanopterin S-methyltransferase subunit B (108 aa).

Residues F77–V99 traverse the membrane as a helical segment.

It belongs to the MtrB family. As to quaternary structure, the complex is composed of 8 subunits; MtrA, MtrB, MtrC, MtrD, MtrE, MtrF, MtrG and MtrH.

It localises to the cell membrane. The enzyme catalyses 5-methyl-5,6,7,8-tetrahydromethanopterin + coenzyme M + 2 Na(+)(in) = 5,6,7,8-tetrahydromethanopterin + methyl-coenzyme M + 2 Na(+)(out). Its pathway is one-carbon metabolism; methanogenesis from CO(2); methyl-coenzyme M from 5,10-methylene-5,6,7,8-tetrahydromethanopterin: step 2/2. Its function is as follows. Part of a complex that catalyzes the formation of methyl-coenzyme M and tetrahydromethanopterin from coenzyme M and methyl-tetrahydromethanopterin. This is an energy-conserving, sodium-ion translocating step. The sequence is that of Tetrahydromethanopterin S-methyltransferase subunit B from Methanococcus maripaludis (strain DSM 14266 / JCM 13030 / NBRC 101832 / S2 / LL).